The sequence spans 778 residues: MLLTSTNTLKISSQRKEWEAKDLTGMFHGQVNGRVKIPASDREGPMSSSIKEMLNNVELSVSSYDTAWAAMVPALDSSKQPLFPKYLSWVMENQKSDGSWGLDLNHPLLIKDSLSSTLACVLTLQRWNVGQQLVHKGLDFIGSNIWAATDESQHSPTGFNMIFPSMIECGTNMGLNLPLNPSSIEAMLIKRDLETESACSLKGTSNLAYVAEGLTRLDDWKDVMKYQRSNGSFFNSPSSTAAAFIHLRDEKCFDYLNSLSKRFENAVPTIYPFDIFTRVSILDILEKLGIDRYISKDKERTLDDLHRCWMKGSDEIFLDPTCSAMAFRLLRTNGYAISSDALSKFEEQKHLYNPKDIKCVLELFKASQMAIFQNEPTLDRIYAWTSTYLKEKLLKGVISDKSLREEVDFVLKHPHARLERIENRKFIESYNVDNVSLTKTSYRFCNVDERYLLTFACQDFNICQSMHQKELDDLERWVIERRLSDLKYARQKVKYAYFAIACRLFQPDFLDARISWVQNSVILTVVDDFFEVGGSLEALSNLIELVERWDEHLTVGYKSEEVKILFHAIYDTINDLADKAYRKQGRCVKRHLVDTWLIYLKSVLKEAEWVTNKTVTTMDEYISNGYISAGSGPIIFSSLYFLEVLSEEIVNSEEYKNLYMHTSMICRLLNDRVQAKSDGAQGKQNSVSLQVIHGNGIITEEEAVKEVTRMIEYHRRELLRMVVETEGSIVPKACKDVFWLMSRILHLFYMSDDGYSSPTKMIHAADAIINEPIIVSQK.

The transit peptide at 1–35 (MLLTSTNTLKISSQRKEWEAKDLTGMFHGQVNGRV) directs the protein to the chloroplast. Residues aspartate 527, glutamate 531, asparagine 670, aspartate 671, and aspartate 678 each contribute to the Mg(2+) site. The short motif at 527 to 531 (DDFFE) is the DDXXD motif element.

This sequence belongs to the terpene synthase family. Mg(2+) is required as a cofactor.

The protein resides in the plastid. The protein localises to the chloroplast. The enzyme catalyses ent-copalyl diphosphate = ent-sandaracopimara-8(14),15-diene + diphosphate. It carries out the reaction ent-copalyl diphosphate = ent-(12E)-labda-8(17),12,14-triene + diphosphate. It functions in the pathway secondary metabolite biosynthesis; terpenoid biosynthesis. Diterpene cyclase involved in the biosynthesis of labdane-related diterpenoids (LRDs) natural products. Catalyzes the cyclization of ent-CDP into ent-sandaracopimaradiene as a major, and ent-pimaradiene and ent-labdatriene as minor products. The sequence is that of Ent-sandaracopimaradiene synthase KSL3, chloroplastic from Ricinus communis (Castor bean).